A 291-amino-acid chain; its full sequence is Pantothenate synthetase (291 aa).

Residue 30 to 37 coordinates ATP; it reads MGALHAGH. Histidine 37 serves as the catalytic Proton donor. Glutamine 61 contributes to the (R)-pantoate binding site. Glutamine 61 is a binding site for beta-alanine. Position 147-150 (147-150) interacts with ATP; it reads GQKD. Residue glutamine 153 participates in (R)-pantoate binding. Residues valine 176 and 184-187 contribute to the ATP site; that span reads LSSR.

The protein belongs to the pantothenate synthetase family. Homodimer.

It localises to the cytoplasm. The catalysed reaction is (R)-pantoate + beta-alanine + ATP = (R)-pantothenate + AMP + diphosphate + H(+). Its pathway is cofactor biosynthesis; (R)-pantothenate biosynthesis; (R)-pantothenate from (R)-pantoate and beta-alanine: step 1/1. Functionally, catalyzes the condensation of pantoate with beta-alanine in an ATP-dependent reaction via a pantoyl-adenylate intermediate. The chain is Pantothenate synthetase from Koribacter versatilis (strain Ellin345).